A 459-amino-acid polypeptide reads, in one-letter code: ATP synthase subunit beta (459 aa).

Gly-148 to Thr-155 provides a ligand contact to ATP.

It belongs to the ATPase alpha/beta chains family. As to quaternary structure, F-type ATPases have 2 components, CF(1) - the catalytic core - and CF(0) - the membrane proton channel. CF(1) has five subunits: alpha(3), beta(3), gamma(1), delta(1), epsilon(1). CF(0) has three main subunits: a(1), b(2) and c(9-12). The alpha and beta chains form an alternating ring which encloses part of the gamma chain. CF(1) is attached to CF(0) by a central stalk formed by the gamma and epsilon chains, while a peripheral stalk is formed by the delta and b chains.

It localises to the cell inner membrane. The enzyme catalyses ATP + H2O + 4 H(+)(in) = ADP + phosphate + 5 H(+)(out). Functionally, produces ATP from ADP in the presence of a proton gradient across the membrane. The catalytic sites are hosted primarily by the beta subunits. The protein is ATP synthase subunit beta of Vesicomyosocius okutanii subsp. Calyptogena okutanii (strain HA).